The chain runs to 163 residues: Glycine cleavage system H-like protein gcvH5, mitochondrial (163 aa).

The transit peptide at 1–23 (MFLFKTTNNLRKSLSNKFFCTRY) directs the protein to the mitochondrion. In terms of domain architecture, Lipoyl-binding spans 50-136 (IGTLGLTENG…MSKGWLCKIK (87 aa)).

The protein belongs to the GcvH family.

The protein resides in the mitochondrion. This chain is Glycine cleavage system H-like protein gcvH5, mitochondrial (gcvH5), found in Dictyostelium discoideum (Social amoeba).